Reading from the N-terminus, the 430-residue chain is Adenylosuccinate synthetase (430 aa).

GTP contacts are provided by residues 12–18 (GDEGKGK) and 40–42 (GHT). D13 acts as the Proton acceptor in catalysis. 2 residues coordinate Mg(2+): D13 and G40. Residues 13–16 (DEGK), 38–41 (NAGH), T130, R144, Q224, T239, and R303 contribute to the IMP site. H41 functions as the Proton donor in the catalytic mechanism. A substrate-binding site is contributed by 299–305 (TVTGRKR). Residues R305, 331 to 333 (KLD), and 413 to 415 (STS) each bind GTP.

The protein belongs to the adenylosuccinate synthetase family. As to quaternary structure, homodimer. Mg(2+) serves as cofactor.

The protein resides in the cytoplasm. The catalysed reaction is IMP + L-aspartate + GTP = N(6)-(1,2-dicarboxyethyl)-AMP + GDP + phosphate + 2 H(+). It participates in purine metabolism; AMP biosynthesis via de novo pathway; AMP from IMP: step 1/2. Its function is as follows. Plays an important role in the de novo pathway of purine nucleotide biosynthesis. Catalyzes the first committed step in the biosynthesis of AMP from IMP. In Paracoccus denitrificans (strain Pd 1222), this protein is Adenylosuccinate synthetase.